A 575-amino-acid polypeptide reads, in one-letter code: Alpha-humulene synthase (575 aa).

4 residues coordinate Mg(2+): D325, D329, D469, and E477. The DDXXD motif signature appears at 325-329 (DDLYD).

Belongs to the terpene synthase family. Tpsa subfamily. Requires Mg(2+) as cofactor. Mn(2+) is required as a cofactor.

It catalyses the reaction (2E,6E)-farnesyl diphosphate = alpha-humulene + diphosphate. It functions in the pathway sesquiterpene biosynthesis. It participates in terpene metabolism; oleoresin biosynthesis. Terpene synthase (TPS) involved in the biosynthesis of sesquiterpene natural products included in conifer oleoresin secretions and volatile emissions; these compounds contribute to biotic and abiotic stress defense against herbivores and pathogens. Catalyzes the conversion of (2E,6E)-farnesyl diphosphate (FPP) to (1E,4E,8E)-alpha-humulene. The protein is Alpha-humulene synthase of Picea glauca (White spruce).